The following is a 245-amino-acid chain: MYPVDLHMHTVASTHAYSTLHDYIVEARQKGIKLFAITDHGPDMADAPHYWHFMNMHVWPRLVDGVGILRGIEANIKNRQGDIDCTGPMLDKIDVIIAGFHEPVFAPQDKAANTEAMIAAMAQGDVHIISHPGNPRYPIDIAAVAAAAARYEVALELNNSSFTHSRKGSEDNCRAIAAAVRDAGGWLALGSDSHIAFSLGGFEHCERIIAEVEFPQERILNVSPRRLLDFLERRGKPAIAELADL.

9 residues coordinate Zn(2+): histidine 7, histidine 9, histidine 15, histidine 40, glutamate 73, histidine 101, histidine 131, aspartate 192, and histidine 194.

It belongs to the PHP family. In terms of assembly, homotrimer. Zn(2+) serves as cofactor.

The sequence is that of Probable phosphatase Spro_1934 from Serratia proteamaculans (strain 568).